Reading from the N-terminus, the 40-residue chain is DAEFRHESGYEVHHQKLVFFAEDVGSNKGAIIGLMVGGVV.

It belongs to the APP family. Binds, via its C-terminus, to the PID domain of several cytoplasmic proteins, including APBB family members, the APBA family, MAPK8IP1, SHC1 and NUMB and DAB1. Binding to DAB1 inhibits its serine phosphorylation. Interacts (via NPXY motif) with DAB2 (via PID domain); the interaction is impaired by tyrosine phosphorylation of the NPXY motif. Also interacts with GPCR-like protein BPP, APPBP1, IB1, KNS2 (via its TPR domains), APPBP2 (via BaSS) and DDB1. In vitro, it binds MAPT via the MT-binding domains. Associates with microtubules in the presence of ATP and in a kinesin-dependent manner. Interacts, through a C-terminal domain, with GNAO1. Interacts with CPEB1, ANKS1B and AGER. Interacts with ITM2B. Interacts with ITM2C. Interacts with IDE. Can form homodimers; dimerization is enhanced in the presence of Cu(2+) ions. Can form homodimers; this is promoted by heparin binding. Interacts with SORL1 (via N-terminal ectodomain); this interaction retains APP in the trans-Golgi network and reduces processing into soluble APP-alpha and amyloid-beta peptides. Interacts with PLD3. Interacts with VDAC1. Interacts with NSG1; could regulate APP processing. Interacts with LRRK2. Interacts (via cytoplasmic domain) with KIF5B. Interacts (via C-terminus) with APBB2/FE65L1 (via C-terminus). Interacts (via intracellular domain) with APBB3. Proteolytically processed under normal cellular conditions. Cleavage either by alpha-secretase, beta-secretase or theta-secretase leads to generation and extracellular release of soluble APP peptides, S-APP-alpha and S-APP-beta, and the retention of corresponding membrane-anchored C-terminal fragments, C80, C83 and C99. Subsequent processing of C80 and C83 by gamma-secretase yields P3 peptides. This is the major secretory pathway and is non-amyloidogenic. Alternatively, presenilin/nicastrin-mediated gamma-secretase processing of C99 releases the amyloid-beta proteins, amyloid-beta protein 40 and amyloid-beta protein 42, major components of amyloid plaques, and the cytotoxic C-terminal fragments, gamma-CTF(50), gamma-CTF(57) and gamma-CTF(59). PSEN1 cleavage is more efficient with C83 than with C99 as substrate (in vitro). Amyloid-beta protein 40 and Amyloid-beta protein 42 are cleaved by ACE. Many other minor amyloid-beta peptides, amyloid-beta 1-X peptides, are found in cerebral spinal fluid (CSF) including the amyloid-beta X-15 peptides, produced from the cleavage by alpha-secretase.

The protein resides in the cell membrane. It localises to the membrane. It is found in the perikaryon. Its subcellular location is the cell projection. The protein localises to the growth cone. The protein resides in the clathrin-coated pit. It localises to the early endosome. It is found in the cytoplasmic vesicle. Functionally, functions as a cell surface receptor and performs physiological functions on the surface of neurons relevant to neurite growth, neuronal adhesion and axonogenesis. Interaction between APP molecules on neighboring cells promotes synaptogenesis. Involved in cell mobility and transcription regulation through protein-protein interactions. Can promote transcription activation through binding to APBB1-KAT5 and inhibit Notch signaling through interaction with Numb. Couples to apoptosis-inducing pathways such as those mediated by G(o) and JIP. Inhibits G(o)-alpha ATPase activity. Acts as a kinesin I membrane receptor, mediating the axonal transport of beta-secretase and presenilin 1. May be involved in copper homeostasis/oxidative stress through copper ion reduction. In vitro, copper-metallated APP induces neuronal death directly or is potentiated through Cu(2+)-mediated low-density lipoprotein oxidation. Can regulate neurite outgrowth through binding to components of the extracellular matrix such as heparin and collagen I and IV. Induces a AGER-dependent pathway that involves activation of p38 MAPK, resulting in internalization of amyloid-beta peptide and mitochondrial dysfunction in cultured cortical neurons. Provides Cu(2+) ions for GPC1 which are required for release of nitric oxide (NO) and subsequent degradation of the heparan sulfate chains on GPC1. This Felis catus (Cat) protein is Amyloid-beta precursor protein.